Here is a 117-residue protein sequence, read N- to C-terminus: Immunoglobulin lambda variable 1-44 (117 aa).

Positions 1–19 (MASFPLLLTLLTHCAGSWA) are cleaved as a signal peptide. Pyrrolidone carboxylic acid is present on Q20. Residues 20-44 (QSVLTQPPSASGTPGQRVTISCSGS) form a framework-1 region. The Ig-like domain occupies 20–117 (QSVLTQPPSA…CAAWDDSLNG (98 aa)). Residues 24–35 (TQPPSASGTPGQ) are compositionally biased toward polar residues. The interval 24–45 (TQPPSASGTPGQRVTISCSGSS) is disordered. A disulfide bond links C41 and C108. Positions 45–52 (SSNIGSNT) are complementarity-determining-1. The segment at 53-69 (VNWYQQLPGTAPKLLIY) is framework-2. The complementarity-determining-2 stretch occupies residues 70-72 (SNN). Residues 73-108 (QRPSGVPDRFSGSKSGTSASLAISGLQSEDEADYYC) form a framework-3 region. Residues 109 to 117 (AAWDDSLNG) are complementarity-determining-3.

Immunoglobulins are composed of two identical heavy chains and two identical light chains; disulfide-linked.

It is found in the secreted. The protein resides in the cell membrane. Its function is as follows. V region of the variable domain of immunoglobulin light chains that participates in the antigen recognition. Immunoglobulins, also known as antibodies, are membrane-bound or secreted glycoproteins produced by B lymphocytes. In the recognition phase of humoral immunity, the membrane-bound immunoglobulins serve as receptors which, upon binding of a specific antigen, trigger the clonal expansion and differentiation of B lymphocytes into immunoglobulins-secreting plasma cells. Secreted immunoglobulins mediate the effector phase of humoral immunity, which results in the elimination of bound antigens. The antigen binding site is formed by the variable domain of one heavy chain, together with that of its associated light chain. Thus, each immunoglobulin has two antigen binding sites with remarkable affinity for a particular antigen. The variable domains are assembled by a process called V-(D)-J rearrangement and can then be subjected to somatic hypermutations which, after exposure to antigen and selection, allow affinity maturation for a particular antigen. The polypeptide is Immunoglobulin lambda variable 1-44 (Homo sapiens (Human)).